Here is a 37-residue protein sequence, read N- to C-terminus: MKVRSSVKKRCEKCRIIKRNGRIMVICENPRHKQKQG.

It belongs to the bacterial ribosomal protein bL36 family.

This is Large ribosomal subunit protein bL36 from Persephonella marina (strain DSM 14350 / EX-H1).